The primary structure comprises 140 residues: Midkine (140 aa).

The first 22 residues, 1–22 (MQHRGFFLLALLALLVVTSAVA), serve as a signal peptide directing secretion. Cystine bridges form between Cys-34–Cys-58, Cys-42–Cys-67, Cys-49–Cys-71, Cys-81–Cys-113, and Cys-91–Cys-123.

Belongs to the pleiotrophin family. In terms of assembly, homodimer. Interacts with ALK. Interacts with LRP1; promotes neuronal survival. Interacts with LRP2. Interacts with NCAM1. Interacts (via C-terminal) with PTPRZ1 (via chondroitin sulfate chains); this interaction is inhibited by PTN; this interaction promotes neuronal migration. Interacts with NCL; this interaction promotes NCL clustering and lateral movements of this complex into lipid rafts leading to MDK internalization. Interacts with LRP6 and LRP8: this interaction is calcium dependent. Interacts with ITGA4. Interacts with ITGA6. Interacts with ITGB1. Interacts with ITGA4:ITGB1 complex; this interaction mediates MDK-induced osteoblast cells migration through PXN phosphorylation. Interacts with ITGA6:ITGB1 complex; this interaction mediates MDK-induced neurite outgrowth. Interacts with NOTCH2; this interactio mediates a nuclear accumulation of NOTCH2 and therefore activation of NOTCH2 signaling leading to interaction between HES1 and STAT3. Interacts with GPC2 (via heparan sulfate chain); this interaction is inhibited by heparin followed by chondroitin sulfate E; this interaction induces GPC2 clustering through heparan sulfate chain; this interaction induces neuronal cell adhesion and neurite outgrowth. Interacts with SDC3; this interaction induces SDC3 clustering; this interaction induces neuronal cell adhesion and neurite outgrowth. Interacts with SDC1. Interacts with CSPG5; this interaction promotes elongation of oligodendroglial precursor-like cells. Expressed in the follicular epithelium and granulosa cells of the ovary.

Its subcellular location is the secreted. Secreted protein that functions as a cytokine and growth factor and mediates its signal through cell-surface proteoglycan and non-proteoglycan receptors. Binds cell-surface proteoglycan receptors via their chondroitin sulfate (CS) groups. Thereby regulates many processes like inflammatory response, cell proliferation, cell adhesion, cell growth, cell survival, tissue regeneration, cell differentiation and cell migration. Participates in inflammatory processes by exerting two different activities. Firstly, mediates neutrophils and macrophages recruitment to the sites of inflammation both by direct action by cooperating namely with ITGB2 via LRP1 and by inducing chemokine expression. This inflammation can be accompanied by epithelial cell survival and smooth muscle cell migration after renal and vessel damage, respectively. Secondly, suppresses the development of tolerogenic dendric cells thereby inhibiting the differentiation of regulatory T cells and also promote T cell expansion through NFAT signaling and Th1 cell differentiation. Promotes tissue regeneration after injury or trauma. After heart damage negatively regulates the recruitment of inflammatory cells and mediates cell survival through activation of anti-apoptotic signaling pathways via MAPKs and AKT pathways through the activation of angiogenesis. Also facilitates liver regeneration as well as bone repair by recruiting macrophage at trauma site and by promoting cartilage development by facilitating chondrocyte differentiation. Plays a role in brain by promoting neural precursor cells survival and growth through interaction with heparan sulfate proteoglycans. Binds PTPRZ1 and promotes neuronal migration and embryonic neurons survival. Binds SDC3 or GPC2 and mediates neurite outgrowth and cell adhesion. Binds chondroitin sulfate E and heparin leading to inhibition of neuronal cell adhesion induced by binding with GPC2. Binds CSPG5 and promotes elongation of oligodendroglial precursor-like cells. Also binds ITGA6:ITGB1 complex; this interaction mediates MDK-induced neurite outgrowth. Binds LRP1; promotes neuronal survival. Binds ITGA4:ITGB1 complex; this interaction mediates MDK-induced osteoblast cells migration through PXN phosphorylation. Binds anaplastic lymphoma kinase (ALK) which induces ALK activation and subsequent phosphorylation of the insulin receptor substrate (IRS1), followed by the activation of mitogen-activated protein kinase (MAPK) and PI3-kinase, and the induction of cell proliferation. Promotes epithelial to mesenchymal transition through interaction with NOTCH2. During arteriogenesis, plays a role in vascular endothelial cell proliferation by inducing VEGFA expression and release which in turn induces nitric oxide synthase expression. Moreover activates vasodilation through nitric oxide synthase activation. Negatively regulates bone formation in response to mechanical load by inhibiting Wnt/beta-catenin signaling in osteoblasts. In addition plays a role in hippocampal development, working memory, auditory response, early fetal adrenal gland development and the female reproductive system. The chain is Midkine from Mus musculus (Mouse).